The chain runs to 262 residues: MGKTFSQLGSWREDENKSILSSKPAIGSKAVNYSSTGSSKSFCSCVPCEGTADASFVTCPTCQGSGKIPQELEKQLVALIPYGDQRLKPKHTKLFVFLAVLICLVTSSFIVFFLFPRSVIVQPAGLNSSTVAFDEADIYLNITNILNISNGNYYPIMVTQLTLEVLHLSLVVGQVSNNLLLHIGPLASEQMFYAVATKIRDENTYKICTWLEIKVHHVLLHIQGTLTCSYLSHSEQLVFQSYEYVDCRGNASVPHQLTPHPP.

A helical membrane pass occupies residues 95-115 (FVFLAVLICLVTSSFIVFFLF).

Belongs to the TMEM106 family. Expressed in renal cells (at protein level). Expressed in epithelial cells.

The protein localises to the cell membrane. Its function is as follows. Activates macrophages and polarizes them into M1-like macrophages through the activation of the MAPK and NF-kappaB signaling pathway. Upon activation, up-regulates the expression of CD80, CD86, CD69 and MHC II on macrophages, and induces the release of pro-inflammatory cytokines such as TNF, IL1B, IL6, CCL2 and nitric oxide. May play a role in inhibition of proliferation and migration. The polypeptide is Transmembrane protein 106A (TMEM106A) (Homo sapiens (Human)).